Here is a 2191-residue protein sequence, read N- to C-terminus: Genome polyprotein (2191 aa).

G2 is lipidated: N-myristoyl glycine; by host. The Cytoplasmic portion of the chain corresponds to 2 to 1501 (GAQVSTQKTG…HVSRAFICLQ (1500 aa)). Residues 566-582 (FYQNDVQNAVERSIVRV) are amphipathic alpha-helix. Active-site for protease 2A activity residues include H878 and D896. Zn(2+) is bound by residues C913 and C915. C967 acts as the For protease 2A activity in catalysis. The Zn(2+) site is built by C973 and H975. Positions 1107 to 1179 (NNGWLKKFTE…EQSAPSQSDQ (73 aa)) are membrane-binding. The oligomerization stretch occupies residues 1107–1245 (NNGWLKKFTE…SPGVGKSVAT (139 aa)). Residues 1128–1132 (AIKIQ) are RNA-binding. The SF3 helicase domain maps to 1211–1367 (EKKMSNYIQF…SMYNQNGKIN (157 aa)). Residues C1375, C1387, and C1392 each coordinate Zn(2+). Residues 1375–1392 (CDEECCPVNFKKCCPLVC) form a C4-type; degenerate zinc finger. The tract at residues 1419-1426 (EYNHRHSV) is RNA-binding. The oligomerization stretch occupies residues 1430 to 1435 (LEALFQ). The stretch at 1502–1517 (ALTTFVSVAGIIYIIY) is an intramembrane region. Residues 1518–2191 (KLFAGFQGAY…TLRRKWLDSF (674 aa)) lie on the Cytoplasmic side of the membrane. An O-(5'-phospho-RNA)-tyrosine modification is found at Y1527. Positions 1547–1725 (GPAFEFAVAM…FSAALLKHYF (179 aa)) constitute a Peptidase C3 domain. Catalysis depends on for protease 3C activity residues H1586, E1617, and C1693. The RdRp catalytic domain maps to 1956-2072 (GHLIAFDYSG…SYPWPIDASL (117 aa)). Mg(2+)-binding residues include D1962 and D2058.

The protein belongs to the picornaviruses polyprotein family. In terms of assembly, interacts with capsid protein VP1 and capsid protein VP3 to form heterotrimeric protomers. As to quaternary structure, interacts with capsid protein VP0, and capsid protein VP3 to form heterotrimeric protomers. Five protomers subsequently associate to form pentamers which serve as building blocks for the capsid. Interacts with capsid protein VP2, capsid protein VP3 and capsid protein VP4 following cleavage of capsid protein VP0. Interacts with host CD55 and FCGRT; these interactions promote virus attachment to the host cell and subsequent internalization. Interacts with capsid protein VP1 and capsid protein VP3 in the mature capsid. Interacts with host CD55 and FCGRT; these interactions promote virus attachment to the host cell and subsequent internalization. In terms of assembly, interacts with capsid protein VP0 and capsid protein VP1 to form heterotrimeric protomers. Five protomers subsequently associate to form pentamers which serve as building blocks for the capsid. Interacts with capsid protein VP4 in the mature capsid. Interacts with protein 2C; this interaction may be important for virion morphogenesis. Interacts with host FCGRT; this interaction promotes virus attachment to the host cell and subsequent internalization. As to quaternary structure, interacts with capsid protein VP1 and capsid protein VP3. Homodimer. In terms of assembly, homohexamer; forms a hexameric ring structure with 6-fold symmetry characteristic of AAA+ ATPases. Interacts (via N-terminus) with host RTN3 (via reticulon domain); this interaction is important for viral replication. Interacts with capsid protein VP3; this interaction may be important for virion morphogenesis. As to quaternary structure, interacts with protein 3CD. Homodimer. Interacts with host GBF1. Interacts (via GOLD domain) with host ACBD3 (via GOLD domain); this interaction allows the formation of a viral protein 3A/ACBD3 heterotetramer with a 2:2 stoichiometry, which will stimulate the recruitment of host PI4KB in order to synthesize PI4P at the viral RNA replication sites. In terms of assembly, interacts with RNA-directed RNA polymerase. As to quaternary structure, interacts with protein 3AB and with RNA-directed RNA polymerase. Interacts with Viral protein genome-linked and with protein 3CD. Requires Mg(2+) as cofactor. In terms of processing, specific enzymatic cleavages in vivo by the viral proteases yield processing intermediates and the mature proteins. Myristoylation is required for the formation of pentamers during virus assembly. Further assembly of 12 pentamers and a molecule of genomic RNA generates the provirion. Post-translationally, during virion maturation, immature virions are rendered infectious following cleavage of VP0 into VP4 and VP2. This maturation seems to be an autocatalytic event triggered by the presence of RNA in the capsid and it is followed by a conformational change infectious virion. In terms of processing, myristoylation is required during RNA encapsidation and formation of the mature virus particle. VPg is uridylylated by the polymerase into VPg-pUpU. This acts as a nucleotide-peptide primer for the genomic RNA replication.

It is found in the virion. It localises to the host cytoplasm. The protein resides in the host cytoplasmic vesicle membrane. Its subcellular location is the host nucleus. It catalyses the reaction a ribonucleoside 5'-triphosphate + H2O = a ribonucleoside 5'-diphosphate + phosphate + H(+). The enzyme catalyses Selective cleavage of Tyr-|-Gly bond in the picornavirus polyprotein.. The catalysed reaction is RNA(n) + a ribonucleoside 5'-triphosphate = RNA(n+1) + diphosphate. It carries out the reaction Selective cleavage of Gln-|-Gly bond in the poliovirus polyprotein. In other picornavirus reactions Glu may be substituted for Gln, and Ser or Thr for Gly.. With respect to regulation, replication or transcription is subject to high level of random mutations by the nucleotide analog ribavirin. In terms of biological role, forms an icosahedral capsid of pseudo T=3 symmetry with capsid proteins VP2 and VP3. The capsid is 300 Angstroms in diameter, composed of 60 copies of each capsid protein and enclosing the viral positive strand RNA genome. Capsid protein VP1 mainly forms the vertices of the capsid. Capsid protein VP1 interacts with host cell receptor to provide virion attachment to target host cells. This attachment induces virion internalization. Tyrosine kinases are probably involved in the entry process. After binding to its receptor, the capsid undergoes conformational changes. Capsid protein VP1 N-terminus (that contains an amphipathic alpha-helix) and capsid protein VP4 are externalized. Together, they shape a pore in the host membrane through which viral genome is translocated to host cell cytoplasm. Functionally, forms an icosahedral capsid of pseudo T=3 symmetry with capsid proteins VP2 and VP3. The capsid is 300 Angstroms in diameter, composed of 60 copies of each capsid protein and enclosing the viral positive strand RNA genome. Lies on the inner surface of the capsid shell. After binding to the host receptor, the capsid undergoes conformational changes. Capsid protein VP4 is released, Capsid protein VP1 N-terminus is externalized, and together, they shape a pore in the host membrane through which the viral genome is translocated into the host cell cytoplasm. Its function is as follows. Component of immature procapsids, which is cleaved into capsid proteins VP4 and VP2 after maturation. Allows the capsid to remain inactive before the maturation step. In terms of biological role, cysteine protease that cleaves viral polyprotein and specific host proteins. It is responsible for the autocatalytic cleavage between the P1 and P2 regions, which is the first cleavage occurring in the polyprotein. Also cleaves the host translation initiation factor EIF4G1, in order to shut down the capped cellular mRNA translation. Inhibits the host nucleus-cytoplasm protein and RNA trafficking by cleaving host members of the nuclear pores. Counteracts stress granule formation probably by antagonizing its assembly or promoting its dissassembly. Functionally, plays an essential role in the virus replication cycle by acting as a viroporin. Creates a pore in the host endoplasmic reticulum and as a consequence releases Ca2+ in the cytoplasm of infected cell. In turn, high levels of cytoplasmic calcium may trigger membrane trafficking and transport of viral ER-associated proteins to viroplasms, sites of viral genome replication. Induces and associates with structural rearrangements of intracellular membranes. Displays RNA-binding, nucleotide binding and NTPase activities. May play a role in virion morphogenesis and viral RNA encapsidation by interacting with the capsid protein VP3. Its function is as follows. Localizes the viral replication complex to the surface of membranous vesicles. Together with protein 3CD binds the Cis-Active RNA Element (CRE) which is involved in RNA synthesis initiation. Acts as a cofactor to stimulate the activity of 3D polymerase, maybe through a nucleid acid chaperone activity. In terms of biological role, localizes the viral replication complex to the surface of membranous vesicles. It inhibits host cell endoplasmic reticulum-to-Golgi apparatus transport and causes the disassembly of the Golgi complex, possibly through GBF1 interaction. This would result in depletion of MHC, trail receptors and IFN receptors at the host cell surface. Plays an essential role in viral RNA replication by recruiting ACBD3 and PI4KB at the viral replication sites, thereby allowing the formation of the rearranged membranous structures where viral replication takes place. Functionally, acts as a primer for viral RNA replication and remains covalently bound to viral genomic RNA. VPg is uridylylated prior to priming replication into VPg-pUpU. The oriI viral genomic sequence may act as a template for this. The VPg-pUpU is then used as primer on the genomic RNA poly(A) by the RNA-dependent RNA polymerase to replicate the viral genome. During genome replication, the VPg-RNA linkage is removed by the host TDP2, thereby accelerating replication. During the late stage of the replication cycle, host TDP2 is excluded from sites of viral RNA synthesis and encapsidation, allowing for the generation of progeny virions. Involved in the viral replication complex and viral polypeptide maturation. It exhibits protease activity with a specificity and catalytic efficiency that is different from protease 3C. Protein 3CD binds to the 5'UTR of the viral genome. Its function is as follows. Replicates the viral genomic RNA on the surface of intracellular membranes. May form linear arrays of subunits that propagate along a strong head-to-tail interaction called interface-I. Covalently attaches UMP to a tyrosine of VPg, which is used to prime RNA synthesis. The positive stranded RNA genome is first replicated at virus induced membranous vesicles, creating a dsRNA genomic replication form. This dsRNA is then used as template to synthesize positive stranded RNA genomes. ss(+)RNA genomes are either translated, replicated or encapsidated. In terms of biological role, major viral protease that mediates proteolytic processing of the polyprotein. Cleaves host EIF5B, contributing to host translation shutoff. Also cleaves host PABPC1, contributing to host translation shutoff. Cleaves host NLRP1, triggers host N-glycine-mediated degradation of the autoinhibitory NLRP1 N-terminal fragment. The protein is Genome polyprotein of Echovirus 6 (strain Charles).